The following is a 486-amino-acid chain: MTQFIKGQWVAGLGHAVTSKNPANNDVIWNSQTATPEQVNTAVEAAREVQFDWFMLGFEARLAIVEAYRAQLEENKAEIAETIAQETGKPQWETATEAGAMIGKIGLSVAAYNKRTGTSENDTPAGRAVLRHKPHGVVAVFGPYNFPGHLPNGHIVPALLAGNTVVFKPSELTPKVAELMLKLWEKAGLPAGVINLVQGEVETGKALASHPQIDGLFFTGSSRTGHILHQQYAGEPGKILALEMGGNNPLIIKGVKDSKAAVHDIIQSAYISSGQRCTCARRLYVEKGAEGDALLAQLTDAVKRIVVGAWNAQPQPFMGAMISETAAKGMVEAQRNLVNLGGHSLVELTHIEEGTGLVSPGLIDVSQVIELPDEEYFGPLLQVVRYTDFDEAIKLANNTRYGLSAGILADSRDDYEYFLARIRAGIVNWNKQITGASGAAPFGGVGASGNHRASAFYAADYCAYPVASVEADEVSLPANLSPGLSL.

220-225 (GSSRTG) lines the NAD(+) pocket. Active-site residues include Glu243 and Cys277.

This sequence belongs to the aldehyde dehydrogenase family. AstD subfamily.

The enzyme catalyses N-succinyl-L-glutamate 5-semialdehyde + NAD(+) + H2O = N-succinyl-L-glutamate + NADH + 2 H(+). The protein operates within amino-acid degradation; L-arginine degradation via AST pathway; L-glutamate and succinate from L-arginine: step 4/5. Functionally, catalyzes the NAD-dependent reduction of succinylglutamate semialdehyde into succinylglutamate. The polypeptide is N-succinylglutamate 5-semialdehyde dehydrogenase (Shewanella sediminis (strain HAW-EB3)).